The chain runs to 1203 residues: Rho GTPase-activating protein gacGG (1203 aa).

7 RCC1 repeats span residues 52-104 (TGEL…AIME), 106-148 (GLLY…VVAD), 155-204 (KRSV…AIVE), 206-255 (NEVF…ARSG), 257-298 (GNVC…VLSE), 299-359 (KGEI…EGRN), and 361-410 (LSVY…YLRG). Positions 316–343 (KLDVNSSPNINSSSGTTTPTTNTTTTTK) are disordered. The span at 320-343 (NSSPNINSSSGTTTPTTNTTTTTK) shows a compositional bias: low complexity. In terms of domain architecture, Rho-GAP spans 381–594 (VDIAESMRRK…TIMKQYPLME (214 aa)). Residues 649–679 (TLEIKNNQNNQNNQKENNNNNNNINNSNNNN) are a coiled coil. Disordered regions lie at residues 657-725 (NNQN…TGNI), 746-789 (KDGN…NLSP), and 831-852 (FANSGSSSNNNNSNNSPSLIGS). Composition is skewed to low complexity over residues 746-788 (KDGN…PNLS) and 833-852 (NSGSSSNNNNSNNSPSLIGS). A coiled-coil region spans residues 995 to 1078 (FDLLEKSMTE…ISNQNLSRVN (84 aa)).

It is found in the cytoplasm. Functionally, rho GTPase-activating protein involved in the signal transduction pathway. This Dictyostelium discoideum (Social amoeba) protein is Rho GTPase-activating protein gacGG (gacGG).